We begin with the raw amino-acid sequence, 1274 residues long: Myosin-binding protein C, cardiac-type (1274 aa).

Position 1 is an N-acetylmethionine (Met1). Residues 8-95 enclose the Ig-like C2-type 1 domain; the sequence is PVSAFTKKPR…SKVKFDLKVT (88 aa). The residue at position 47 (Ser47) is a Phosphoserine. Over residues 95–104 the composition is skewed to basic and acidic residues; it reads TEPAPPEKAE. The disordered stretch occupies residues 95–153; sequence TEPAPPEKAESAVAPTSMEAPETPKEVPALATQLEGNVSSPEGSVSVTQDGSVAGSQGA. The residue at position 117 (Thr117) is a Phosphothreonine. Residues 128–149 are compositionally biased toward polar residues; the sequence is LEGNVSSPEGSVSVTQDGSVAG. The Ig-like C2-type 2 domain maps to 157-259; the sequence is PIGLFLMRPQ…KFDSCNFNLT (103 aa). Zn(2+)-binding residues include Gln212, His214, Glu227, and His229. At Ser279 the chain carries Phosphoserine. A Phosphothreonine; by PKA and PKC modification is found at Thr287. Ser288 carries the post-translational modification Phosphoserine. At Ser307 the chain carries Phosphoserine; by PKA. A phosphoserine mark is found at Ser312 and Ser427. 2 consecutive Ig-like C2-type domains span residues 361–452 and 452–546; these read KKST…VKEP and PPVL…KKLE. Residues Cys436 and Cys443 are joined by a disulfide bond. Phosphoserine occurs at positions 459 and 550. Phosphothreonine is present on Thr607. The region spanning 645–765 is the Ig-like C2-type 5 domain; sequence PKIHLDCPGS…PVGEDQVNLT (121 aa). 2 consecutive Fibronectin type-III domains span residues 774-870 and 872-967; these read APAA…IGPP and EPTH…VQEI. The 89-residue stretch at 971–1059 folds into the Ig-like C2-type 6 domain; it reads PRLQLPRHLR…ENMEDKATLV (89 aa). Residues 1068-1163 enclose the Fibronectin type-III 3 domain; that stretch reads PPLDIRVVET…TKEPIFIPRP (96 aa). The region spanning 1181–1269 is the Ig-like C2-type 7 domain; sequence PSFTQPLTNR…GEAQCECRLE (89 aa). Residue Arg1241 is modified to Omega-N-methylarginine.

The protein belongs to the immunoglobulin superfamily. MyBP family. Post-translationally, substrate for phosphorylation by PKA and PKC. Reversible phosphorylation appears to modulate contraction. Polyubiquitinated.

Its function is as follows. Thick filament-associated protein located in the crossbridge region of vertebrate striated muscle a bands. In vitro it binds MHC, F-actin and native thin filaments, and modifies the activity of actin-activated myosin ATPase. It may modulate muscle contraction or may play a more structural role. This is Myosin-binding protein C, cardiac-type (Mybpc3) from Rattus norvegicus (Rat).